Here is a 228-residue protein sequence, read N- to C-terminus: MSGGIKQWPEDERPREKLLKRGAKALSDAELLALIIGTGDSSSGRSALDIGREMLQDFGGLRNLAHATASEICRIKGAGPAKAACIKAALELANRYGARRFESLERFTSPSQVFEHFHHEFRDHRKEYFLTLLLDGKNRILKRVQISEGSLNQSIVHPREVFNQAVRESAAAIILVHNHPTGDPTPSREDIDITRRLREAGDLLGIKVLDHIIIGDGSFLSFVDRGMM.

The region spanning 106–228 is the MPN domain; sequence RFTSPSQVFE…FLSFVDRGMM (123 aa). Positions 177, 179, and 190 each coordinate Zn(2+). The short motif at 177–190 is the JAMM motif element; sequence HNHPTGDPTPSRED.

This sequence belongs to the UPF0758 family.

The chain is UPF0758 protein Gura_4138 from Geotalea uraniireducens (strain Rf4) (Geobacter uraniireducens).